A 306-amino-acid chain; its full sequence is Serine/threonine-protein kinase csk1 (306 aa).

One can recognise a Protein kinase domain in the interval leucine 11 to alanine 306. ATP is bound by residues leucine 17–valine 25 and lysine 40. Catalysis depends on aspartate 129, which acts as the Proton acceptor.

It belongs to the protein kinase superfamily. CMGC Ser/Thr protein kinase family. CDC2/CDKX subfamily.

The catalysed reaction is L-seryl-[protein] + ATP = O-phospho-L-seryl-[protein] + ADP + H(+). The enzyme catalyses L-threonyl-[protein] + ATP = O-phospho-L-threonyl-[protein] + ADP + H(+). Its function is as follows. Acts as a CAK-activating kinase that specifically activates crk1 of the crk1-mcs2 CAK complex. The polypeptide is Serine/threonine-protein kinase csk1 (csk1) (Schizosaccharomyces pombe (strain 972 / ATCC 24843) (Fission yeast)).